The chain runs to 513 residues: MKQFKLVNAVSASFVLIGLVLANSDSVFDKWTQEDLADYLRDNKKSLEKYATDSIEDLKTEASQVWDKHAQPKPWWQVWSSDSSSVSNSNPGWFGYTGSSDHPVSDWLFDTWSTDSLRNFLKKNGVDVDDAKASKDSLVKTAKENFNKISKSLKSSGYYPSSSYFDSWSTKDLQNWLNDNGIDYDKAVQSKDELVQKVKENIYRTSEKAEQQRLGLLESLDLAHQQILDTSGQIKDTVFDKWSSDQLTNWLESHKVNIDKNMAKKHDYLVRMAKENSANLKDDIYWYLDYMKRESSPFLTKTPEYVGSVWDSSKNFLTNLYSKFRGKTDNVINDTFLVGLDSWPKDKLKMFLDARGIKYSMLSTEHQLRELVKKSRNEKLKILPKDYQKYFDNSNWSLDDIKGWFADKKDDFQDSQTYSTIMQDFDKVSKNTNDAKDQIAKTWSNTFQSWSQEDLLQYLKSFGVPVKQTSTKDDLINLAKQNTQWLFGTVKEPAYKRYLHNVKNWSKSILGFN.

Position 237 is a phosphothreonine (threonine 237). At serine 243 the chain carries Phosphoserine.

The polypeptide is Meiotic sister chromatid recombination protein 1 (MSC1) (Saccharomyces cerevisiae (strain ATCC 204508 / S288c) (Baker's yeast)).